We begin with the raw amino-acid sequence, 504 residues long: Outer capsid protein VP5 (504 aa).

The interval methionine 1–glutamate 42 is involved in membrane permeabilization.

Belongs to the orbivirus VP5 family.

Its subcellular location is the virion. VP5 protein is one of the two proteins (with VP2) which constitute the virus particle outer capsid. Acts as a membrane permeabilization protein that mediates release of viral particles from endosomal compartments into the cytoplasm. Permeabilization activity is probably negatively regulated by VP2 and is triggered by endosomal degradation of VP2 and exposure to low pH. The protein is Outer capsid protein VP5 (Segment-6) of African horse sickness virus 6 (AHSV-6).